A 104-amino-acid polypeptide reads, in one-letter code: Large ribosomal subunit protein uL24 (104 aa).

Belongs to the universal ribosomal protein uL24 family. As to quaternary structure, part of the 50S ribosomal subunit.

Functionally, one of two assembly initiator proteins, it binds directly to the 5'-end of the 23S rRNA, where it nucleates assembly of the 50S subunit. Its function is as follows. One of the proteins that surrounds the polypeptide exit tunnel on the outside of the subunit. The sequence is that of Large ribosomal subunit protein uL24 from Shewanella piezotolerans (strain WP3 / JCM 13877).